The sequence spans 426 residues: Adenylosuccinate synthetase 2 (426 aa).

GTP is bound by residues G12–K18 and G40–T42. D13 functions as the Proton acceptor in the catalytic mechanism. The Mg(2+) site is built by D13 and G40. Residues D13 to K16, N38 to H41, R147, N223, T238, and R302 contribute to the IMP site. The active-site Proton donor is the H41. T298–R304 contributes to the substrate binding site. Residues R304, K330–D332, and G412–G414 contribute to the GTP site.

This sequence belongs to the adenylosuccinate synthetase family. Homodimer. Mg(2+) is required as a cofactor.

Its subcellular location is the cytoplasm. It carries out the reaction IMP + L-aspartate + GTP = N(6)-(1,2-dicarboxyethyl)-AMP + GDP + phosphate + 2 H(+). It participates in purine metabolism; AMP biosynthesis via de novo pathway; AMP from IMP: step 1/2. Plays an important role in the de novo pathway and in the salvage pathway of purine nucleotide biosynthesis. Catalyzes the first committed step in the biosynthesis of AMP from IMP. In Laccaria bicolor (strain S238N-H82 / ATCC MYA-4686) (Bicoloured deceiver), this protein is Adenylosuccinate synthetase 2.